A 133-amino-acid chain; its full sequence is Small ribosomal subunit protein bS16 (133 aa).

The segment covering 83-101 (KRDARSNPKKAEPGKKAQE) has biased composition (basic and acidic residues). Positions 83 to 102 (KRDARSNPKKAEPGKKAQER) are disordered.

It belongs to the bacterial ribosomal protein bS16 family.

In Mesorhizobium japonicum (strain LMG 29417 / CECT 9101 / MAFF 303099) (Mesorhizobium loti (strain MAFF 303099)), this protein is Small ribosomal subunit protein bS16.